The sequence spans 104 residues: Signal recognition particle 19 kDa protein (104 aa).

The protein belongs to the SRP19 family. In terms of assembly, part of the signal recognition particle protein translocation system, which is composed of SRP and FtsY. Archaeal SRP consists of a 7S RNA molecule of 300 nucleotides and two protein subunits: SRP54 and SRP19.

It is found in the cytoplasm. Its function is as follows. Involved in targeting and insertion of nascent membrane proteins into the cytoplasmic membrane. Binds directly to 7S RNA and mediates binding of the 54 kDa subunit of the SRP. The sequence is that of Signal recognition particle 19 kDa protein from Archaeoglobus fulgidus (strain ATCC 49558 / DSM 4304 / JCM 9628 / NBRC 100126 / VC-16).